We begin with the raw amino-acid sequence, 1508 residues long: Calponin homology domain-containing protein DDB_G0272472 (1508 aa).

6 disordered regions span residues 1 to 165 (MFRN…KNDF), 197 to 290 (DSEE…NLSP), 309 to 518 (DFKS…TSIV), 531 to 561 (AANA…LFND), 680 to 706 (KEKQ…EKEL), and 1036 to 1391 (KIEK…KKSA). Residues 81–107 (SSSPSTSTTTTTKSSSTTTTTTTSSSS) are compositionally biased toward low complexity. Positions 208–222 (PIKKKQSNDLEKNIF) are enriched in basic and acidic residues. Low complexity-rich tracts occupy residues 234–251 (KQST…QKQP), 263–290 (FGDS…NLSP), and 315–332 (SNNT…KSKP). Basic and acidic residues-rich tracts occupy residues 337-346 (QKEEIKEVST) and 362-371 (VDEKPKERST). A compositionally biased stretch (polar residues) spans 380-391 (KTVTVKSNNSFE). The segment covering 395–438 (FGSTTTNDDGGDNDFSFTPATTPSSSSSTKATTTSPSSTTTTKS) has biased composition (low complexity). Over residues 439–452 (NINIGQKSNKSVDQ) the composition is skewed to polar residues. Positions 455-498 (QFLNDIFQQEEQDKKRREEEAKLKQQQKQKEKEQIKDEIDDLFK) form a coiled coil. The span at 465–498 (EQDKKRREEEAKLKQQQKQKEKEQIKDEIDDLFK) shows a compositional bias: basic and acidic residues. 2 stretches are compositionally biased toward low complexity: residues 500 to 516 (SKPT…STTS) and 531 to 557 (AANA…KSTN). Over residues 1036 to 1164 (KIEKEKEERD…DQEEKEKQLK (129 aa)) the composition is skewed to basic and acidic residues. Composition is skewed to low complexity over residues 1165-1181 (EQQQ…TTTT) and 1189-1206 (DSDA…SSHS). Residues 1216–1225 (SKAKGRKKPT) show a composition bias toward basic residues. Residues 1226–1235 (RRELTKDGNR) show a composition bias toward basic and acidic residues. Positions 1333–1355 (PTVTQTTTTTTTPPTTPPSSSVQ) are enriched in low complexity. Residues 1362-1374 (RSFSGSSFMGINS) are compositionally biased toward polar residues. Positions 1397–1504 (MKALDVLLQW…YLSEFFKVMK (108 aa)) constitute a Calponin-homology (CH) domain.

The protein is Calponin homology domain-containing protein DDB_G0272472 of Dictyostelium discoideum (Social amoeba).